Here is a 160-residue protein sequence, read N- to C-terminus: Cytochrome b6-f complex subunit 4 (160 aa).

The next 3 membrane-spanning stretches (helical) occupy residues 36-56, 95-115, and 131-151; these read LLYI…GLAV, LLGV…PFLE, and TVFL…TLPI.

The protein belongs to the cytochrome b family. PetD subfamily. The 4 large subunits of the cytochrome b6-f complex are cytochrome b6, subunit IV (17 kDa polypeptide, petD), cytochrome f and the Rieske protein, while the 4 small subunits are petG, petL, petM and petN. The complex functions as a dimer.

The protein localises to the plastid. It localises to the chloroplast thylakoid membrane. Functionally, component of the cytochrome b6-f complex, which mediates electron transfer between photosystem II (PSII) and photosystem I (PSI), cyclic electron flow around PSI, and state transitions. The chain is Cytochrome b6-f complex subunit 4 from Daucus carota (Wild carrot).